The sequence spans 212 residues: MNVFRLSGDLCHLAAIIILLLKIWNSRSCAGISGKSQLLFAMVFTTRYLDLFTSFISLYNTSMKVIYMGCAYATVYLIYMKFKATYDGNHDTFRVEFLVVPVGGLSVLVNHDFSPLEILWTFSIYLESVAILPQLFMISKTGEAETITTHYLFFLGLYRALYLFNWIWRFSFEGFFDLIAIVAGVVQTILYCDFFYLYVTKVLKGKKLSLPA.

The Lumenal portion of the chain corresponds to 1–4 (MNVF). Residues 5–24 (RLSGDLCHLAAIIILLLKIW) traverse the membrane as a helical segment. Residues 25–32 (NSRSCAGI) lie on the Cytoplasmic side of the membrane. Residues 33-52 (SGKSQLLFAMVFTTRYLDLF) traverse the membrane as a helical segment. The interval 47–48 (RY) is interaction with the K-D-E-L motif on target proteins. The Lumenal portion of the chain corresponds to 53–58 (TSFISL). Residues 59–79 (YNTSMKVIYMGCAYATVYLIY) form a helical membrane-spanning segment. Topologically, residues 80-92 (MKFKATYDGNHDT) are cytoplasmic. The helical transmembrane segment at 93 to 110 (FRVEFLVVPVGGLSVLVN) threads the bilayer. Residues 111–116 (HDFSPL) are Lumenal-facing. A helical membrane pass occupies residues 117–135 (EILWTFSIYLESVAILPQL). Residues 136–149 (FMISKTGEAETITT) are Cytoplasmic-facing. A helical transmembrane segment spans residues 150–168 (HYLFFLGLYRALYLFNWIW). Positions 159-169 (RALYLFNWIWR) are interaction with the K-D-E-L motif on target proteins. Residues 169-178 (RFSFEGFFDL) lie on the Lumenal side of the membrane. Residues 179 to 199 (IAIVAGVVQTILYCDFFYLYV) form a helical membrane-spanning segment. The Cytoplasmic portion of the chain corresponds to 200–212 (TKVLKGKKLSLPA). An important for recycling of cargo proteins with the sequence motif K-D-E-L from the Golgi to the endoplasmic reticulum region spans residues 204-207 (KGKK).

This sequence belongs to the ERD2 family.

It localises to the endoplasmic reticulum membrane. The protein localises to the golgi apparatus membrane. The protein resides in the cytoplasmic vesicle. Its subcellular location is the COPI-coated vesicle membrane. Its function is as follows. Receptor for the C-terminal sequence motif K-D-E-L that is present on endoplasmic reticulum resident proteins and that mediates their recycling from the Golgi back to the endoplasmic reticulum. Binding is pH dependent, and is optimal at pH 5-5.4. This Xenopus laevis (African clawed frog) protein is ER lumen protein-retaining receptor 2 (kdelr2).